A 226-amino-acid polypeptide reads, in one-letter code: 7-cyano-7-deazaguanine synthase (226 aa).

7-17 (LSGGMDSLVTT) is an ATP binding site. Residues cysteine 187, cysteine 195, cysteine 198, and cysteine 201 each coordinate Zn(2+).

Belongs to the QueC family. Requires Zn(2+) as cofactor.

It catalyses the reaction 7-carboxy-7-deazaguanine + NH4(+) + ATP = 7-cyano-7-deazaguanine + ADP + phosphate + H2O + H(+). Its pathway is purine metabolism; 7-cyano-7-deazaguanine biosynthesis. Functionally, catalyzes the ATP-dependent conversion of 7-carboxy-7-deazaguanine (CDG) to 7-cyano-7-deazaguanine (preQ(0)). This Chlorobium phaeobacteroides (strain DSM 266 / SMG 266 / 2430) protein is 7-cyano-7-deazaguanine synthase.